The primary structure comprises 340 residues: Sideroflexin-5 (340 aa).

4 helical membrane-spanning segments follow: residues 103–123 (IFMPFRMSGYIPFGTPIVVGL), 163–183 (FIQGYLGAVISAVSIAVGLNV), 254–274 (LTRVVLPMPILVLPPIVMSML), and 287–307 (LLPVQSLVCLAAFGLALPLAI).

It belongs to the sideroflexin family. In terms of tissue distribution, primarily expressed in the brain.

The protein localises to the mitochondrion inner membrane. It catalyses the reaction citrate(in) = citrate(out). Functionally, mitochondrial amino-acid transporter. Transports citrate. Does not act as a serine transporter: not able to mediate transport of serine into mitochondria. In brown adipose tissue, plays a role in the regulation of UCP1-dependent thermogenesis probably by supporting mitochondrial glycerol-3-phosphate utilization. The polypeptide is Sideroflexin-5 (Homo sapiens (Human)).